The chain runs to 448 residues: MALEKLGKALNSALRKLARSSTVDEALIREVVRDIQRALIQSDVNVRLVLQLTKRIQERALNEKPPAGVSPREHVIKIVYEELTKLLGKEAVPLEIREKPTILLTVGIQGSGKTTTIAKLARHLQKRGYKVGLVCTDTWRPGAYYQLKQLVEPYNIEVFGDPGEKDAIKLAREGVEYFKDKGVDVIIVDTAGRHKEESGLIEEMKQISEAIKPHEVILVIDGTIGQQAYHQALAFKEATPIGSIIVTKLDGSAKGGGALSAVAATGAPIKFIGVGEKIDDLEPFDPKRFVSRLLGLGDIQGLLEKIEELQKEQEFKEEDVEKFLRGKFNLKDMYAQLEAMQKMGPLKQILQMIPGLGYSLPDEAVRVGEEKLRRYRIIMDSMTEEELENPDIINYSRIKRIARGSGTSTREVRELLAQYNQMRKMFKNLDKRKLAKMAKKFNFGGLGI.

GTP-binding positions include 107–114 (GIQGSGKT), 189–193 (DTAGR), and 247–250 (TKLD).

It belongs to the GTP-binding SRP family. SRP54 subfamily. Part of the signal recognition particle protein translocation system, which is composed of SRP and FtsY. Archaeal SRP consists of a 7S RNA molecule of 300 nucleotides and two protein subunits: SRP54 and SRP19.

The protein localises to the cytoplasm. The catalysed reaction is GTP + H2O = GDP + phosphate + H(+). Functionally, involved in targeting and insertion of nascent membrane proteins into the cytoplasmic membrane. Binds to the hydrophobic signal sequence of the ribosome-nascent chain (RNC) as it emerges from the ribosomes. The SRP-RNC complex is then targeted to the cytoplasmic membrane where it interacts with the SRP receptor FtsY. The protein is Signal recognition particle 54 kDa protein of Thermococcus gammatolerans (strain DSM 15229 / JCM 11827 / EJ3).